Here is a 457-residue protein sequence, read N- to C-terminus: MPLTQTPSIFTVSRLNQSVRLLLEQEMGQVWISGEISNFTQPASGHWYFTLKDDTAQVRCAMFRNSNRRVTFRPQHGQQVLVRANITLYEPRGDYQIIVESMQPAGEGLLQQRYEQLKQQLAAEGLFDPALKKPLPSPARQVGVITSKTGAALHDVLNVLRRRDPSLPVVIYPTAVQGDDAPAQIVRAIELANLRDECDVLIVGRGGGSLEDLWSFNDERVARAIFASRIPIVSAVGHETDVTIADFVADLRAPTPSAAAEIVSRNQLELLRQVQALQQRLEMAMDYSLANRQQRFTRLHHRLEQQHPQLRLARQQTLLMRLRQRMDNALDSRMRHATQRQTRLMQRLNQQQPLPRLHRASARVQQLEYRLGQIVAARLSHTRERFGNAITHLEAVSPLATLARGYSVTTAQDGNVLKATKQVRPGDTLTTRLADGWVESEVRQITPAKKTRKKKTG.

The protein belongs to the XseA family. In terms of assembly, heterooligomer composed of large and small subunits.

Its subcellular location is the cytoplasm. The enzyme catalyses Exonucleolytic cleavage in either 5'- to 3'- or 3'- to 5'-direction to yield nucleoside 5'-phosphates.. Bidirectionally degrades single-stranded DNA into large acid-insoluble oligonucleotides, which are then degraded further into small acid-soluble oligonucleotides. This Cronobacter sakazakii (strain ATCC BAA-894) (Enterobacter sakazakii) protein is Exodeoxyribonuclease 7 large subunit.